The sequence spans 414 residues: Probable cell wall biosynthesis protein LcpB (414 aa).

The interval Met1–Arg108 is disordered. The Cytoplasmic portion of the chain corresponds to Met1 to Cys120. The segment covering Ile9 to Gly23 has biased composition (basic and acidic residues). The segment covering Arg33–Pro42 has biased composition (pro residues). Low complexity predominate over residues Pro43 to Arg53. Pro residues predominate over residues Gln54 to Val80. The helical transmembrane segment at Leu121–Trp141 threads the bilayer. The Periplasmic portion of the chain corresponds to Ala142–Arg414.

This sequence belongs to the LytR/CpsA/Psr (LCP) family.

Its subcellular location is the cell inner membrane. This Corynebacterium glutamicum (strain ATCC 13032 / DSM 20300 / JCM 1318 / BCRC 11384 / CCUG 27702 / LMG 3730 / NBRC 12168 / NCIMB 10025 / NRRL B-2784 / 534) protein is Probable cell wall biosynthesis protein LcpB.